The following is a 564-amino-acid chain: Zyxin (564 aa).

A2 is modified (N-acetylalanine). The disordered stretch occupies residues 30–141 (VAPKPKVNPF…TQLPPQPREK (112 aa)). Composition is skewed to pro residues over residues 63–78 (IPPP…PPPL) and 93–109 (FPPP…PPAP). S117, S144, S170, and S171 each carry phosphoserine. Positions 162-344 (NDPFKARVSS…RSPGGPGPLT (183 aa)) are disordered. Composition is skewed to pro residues over residues 174 to 189 (VPPP…PSTK) and 197 to 214 (PLPP…PQPQ). T180 carries the post-translational modification Phosphothreonine. Residues 234–243 (QPVSSANTQP) are compositionally biased toward polar residues. Residue R244 is modified to Asymmetric dimethylarginine. Over residues 255–275 (PKFAPVAPKFTPVVSKFSPGA) the composition is skewed to low complexity. N6-acetyllysine occurs at positions 256 and 263. Phosphothreonine is present on T265. K270 carries the post-translational modification N6-acetyllysine. 2 positions are modified to phosphoserine: S272 and S300. The segment covering 294–310 (SSVSTGSPQPPSFTYAQ) has biased composition (polar residues). Positions 311–322 (QKEKPLVQEKQH) are enriched in basic and acidic residues. S336 carries the phosphoserine modification. LIM zinc-binding domains are found at residues 376–435 (CGKC…TLEK), 436–495 (CNTC…YAPR), and 496–562 (CSVC…SARA).

This sequence belongs to the zyxin/ajuba family. Interacts, via the Pro-rich regions, with the EVH1 domains of ENAH, EVL and VASP. Interacts with the first LIM domain of TES. Interacts with SYNPO2.

It is found in the cytoplasm. The protein localises to the cytoskeleton. It localises to the cell junction. Its subcellular location is the focal adhesion. The protein resides in the nucleus. Its function is as follows. Adhesion plaque protein. Binds alpha-actinin and the CRP protein. Important for targeting TES and ENA/VASP family members to focal adhesions and for the formation of actin-rich structures. May be a component of a signal transduction pathway that mediates adhesion-stimulated changes in gene expression. In Mus musculus (Mouse), this protein is Zyxin (Zyx).